We begin with the raw amino-acid sequence, 628 residues long: Chaperone protein HtpG (628 aa).

The segment at 1–340 (MSTETLQKET…SADLPLNVSR (340 aa)) is a; substrate-binding. The tract at residues 341-557 (EILQHSKDIE…EHDLSGNLER (217 aa)) is b. The tract at residues 558-628 (LLKAAGQKTP…FVRRVNAMLA (71 aa)) is c.

The protein belongs to the heat shock protein 90 family. As to quaternary structure, homodimer.

The protein localises to the cytoplasm. Molecular chaperone. Has ATPase activity. The polypeptide is Chaperone protein HtpG (Methylobacillus flagellatus (strain ATCC 51484 / DSM 6875 / VKM B-1610 / KT)).